A 166-amino-acid chain; its full sequence is MELMIGRVVKSHGIRGEVAIEVTTEEPEIRFAQGEVLNGRQGGKEHSLTIASVRPHQNRLLVKFKEIADRTAADSLRGTRFFAAPLDDDVDDGFYDHELEGLAVIHGEEKIGEVSGVIHGPAQSLLEVTLESGKEVLIPFVHDIVPEVDLDAGTCVITPPEGLLEL.

Residues 91–163 enclose the PRC barrel domain; that stretch reads DDGFYDHELE…TCVITPPEGL (73 aa).

It belongs to the RimM family. Binds ribosomal protein uS19.

The protein localises to the cytoplasm. Its function is as follows. An accessory protein needed during the final step in the assembly of 30S ribosomal subunit, possibly for assembly of the head region. Essential for efficient processing of 16S rRNA. May be needed both before and after RbfA during the maturation of 16S rRNA. It has affinity for free ribosomal 30S subunits but not for 70S ribosomes. The sequence is that of Ribosome maturation factor RimM from Corynebacterium diphtheriae (strain ATCC 700971 / NCTC 13129 / Biotype gravis).